The primary structure comprises 553 residues: Putative transport protein AHA_3492 (553 aa).

The next 5 helical transmembrane spans lie at 4 to 24, 29 to 49, 65 to 85, 95 to 115, and 158 to 178; these read IALS…LGNW, VGLG…FAGL, FGLI…FFSS, GFAA…HQLF, and MGYA…MWLI. RCK C-terminal domains lie at 191 to 276 and 279 to 361; these read AQFE…VLGE and ETSL…VVGN. 6 helical membrane-spanning segments follow: residues 371 to 391, 403 to 425, 439 to 459, 465 to 485, 493 to 513, and 533 to 553; these read MLPV…PFYL, AGGP…LYWF, IVLF…DTLI, AWMM…GVLA, YLTL…LAFA, and LVMF…WAGA.

It belongs to the AAE transporter (TC 2.A.81) family. YidE subfamily.

It localises to the cell membrane. This Aeromonas hydrophila subsp. hydrophila (strain ATCC 7966 / DSM 30187 / BCRC 13018 / CCUG 14551 / JCM 1027 / KCTC 2358 / NCIMB 9240 / NCTC 8049) protein is Putative transport protein AHA_3492.